A 159-amino-acid chain; its full sequence is MAKEQGRKLIAQNKKARHDYHIEDTYEAGLVLQGTEVKSLRQGRASLVDGFVDIDRGEAWLHGVHIPEYSQGTWTNHAARRKRKLLLNRDEIDKIERRVNEKGLTVVPLALYFKDGRAKVEIALAKGKKSWDKRAALAERQANRETEQAVGRRLKGMHD.

Basic and acidic residues predominate over residues 137-147 (LAERQANRETE). The tract at residues 137–159 (LAERQANRETEQAVGRRLKGMHD) is disordered.

This sequence belongs to the SmpB family.

The protein localises to the cytoplasm. In terms of biological role, required for rescue of stalled ribosomes mediated by trans-translation. Binds to transfer-messenger RNA (tmRNA), required for stable association of tmRNA with ribosomes. tmRNA and SmpB together mimic tRNA shape, replacing the anticodon stem-loop with SmpB. tmRNA is encoded by the ssrA gene; the 2 termini fold to resemble tRNA(Ala) and it encodes a 'tag peptide', a short internal open reading frame. During trans-translation Ala-aminoacylated tmRNA acts like a tRNA, entering the A-site of stalled ribosomes, displacing the stalled mRNA. The ribosome then switches to translate the ORF on the tmRNA; the nascent peptide is terminated with the 'tag peptide' encoded by the tmRNA and targeted for degradation. The ribosome is freed to recommence translation, which seems to be the essential function of trans-translation. This chain is SsrA-binding protein, found in Nocardioides sp. (strain ATCC BAA-499 / JS614).